A 213-amino-acid polypeptide reads, in one-letter code: Thymidylate kinase (213 aa).

Position 10 to 17 (10 to 17) interacts with ATP; it reads GLEGAGKT.

The protein belongs to the thymidylate kinase family.

It carries out the reaction dTMP + ATP = dTDP + ADP. In terms of biological role, phosphorylation of dTMP to form dTDP in both de novo and salvage pathways of dTTP synthesis. In Shigella boydii serotype 18 (strain CDC 3083-94 / BS512), this protein is Thymidylate kinase.